The following is a 1261-amino-acid chain: MKIKEVRITGFRSYKDNTNVSGFSPRSNVVVGRNGSGKSNFFHAIQFVLSDEYAHLKEEQRLGLLHESTGPKVAHARVEITFDNSEKRLMAFENSEVKIVRQVGKKKDQYYIDNKMVPRAEVVNLMESAGFSRSNPYYIVKQGKINELATSPDAYKLKLLREVAGTRVYDERKEESLKILKETKMKTEKIQGLLKYIDERLQTLENEKEDLKEYQKLDKTKRSVEYTMYDNTNKEAIKEKTKLDEQKVELNQKDNNVKSQLNDVIAEMAKLKTDKKKLESLGRGLREDKETLQAEETKMVEEKMTLKLEIDSLNEENTRERQGRQNAEHSLQGVGDEIFKNEEELDTIKPEYAKLLEEESRLKTDIRIDESRAKEILAKQGQRSQFSSVDDRDKFLRNEIRRISGLIADNKEREETIQKELADVEREDEKLNNEIQSISRTIDENRYEMDTFAAKSTSLKQEYDAAYVAQQTAAREEKAIRDKIGNTEQDISAANDQLRRIVARPVYNGITGVRKVIEEFKHDNRNGQHDDVINGYYGTVIELAEVPDMFRTAVEVIAQNRLFYHVVETDRIATKILRKFNEMQLPGEINFFPMNRVSAPRQRDLSNNSNARPMSDVIDYEVQYDKVFKSITANVIIVRTLDQAARDLRNEGFDVVSVDGDQMSKKGVMTGGFIDKKRSKLELHTQKDRFTKELAELQKSLAEAEKMVRERTQEAEKIRNRMQQHENQIGDFHRKHRELTEAKNAISQQFYMVTSTKEPKKDQLLGIKNHLRELLAQKENFEQEIGSNMSSQLTSDEEQTVKKLRKKVDEMTKQLATVSRRRMDLMHRKNAIENLLTKKLYKTKESLTARVDDISDNERRHKLENANAQLTSLLTRMESTRKQLATAISELQDYETKEKALQINIDNVLEQQRDLEKQQADFQLQYDKITAKEDEVKQKREDSLKKLILSRYSIKTRKNQFSYEISDSEEVGAKREPIEHRKLKISTFCLEYRAKLEKVHSNMRLLGALPTDTFSKWQNVKPRELEKKLLECVNELKKYENVNKKALDQYMTASSQKEELTKRMAEQKKSEDSIEELLKVLENRKYEAIDLTFKQVKKNFEQVFKQLVPHGRGKMQMRAREQRDDEEGINSVELYEGISVLVSFVSDDGDSETREMTQLSGGQKSLVALAIIFSIQKCDPAPFYLFDEIDAALDAQHRKSVADMIQSLSDQAQFVTTTFRPELLATAEKFYGVRFRNKVSHIDSVTREQAYDFVEDDTTHG.

Coiled coils occupy residues 188-332 (EKIQ…HSLQ) and 406-450 (LIAD…YEMD). The 112-residue stretch at 534–645 (NGYYGTVIEL…IIVRTLDQAA (112 aa)) folds into the SMC hinge domain. Coiled-coil stretches lie at residues 677 to 826 (KRSK…MDLM), 857 to 930 (NERR…DKIT), and 1023 to 1085 (RELE…ENRK). A DA-box motif is present at residues 1159-1193 (LSGGQKSLVALAIIFSIQKCDPAPFYLFDEIDAAL).

This sequence belongs to the SMC family. SMC3 subfamily. As to quaternary structure, component of the cohesin complex, composed of the smc-1 and smc-3 heterodimer attached via their SMC hinge domain, scc-1 which links them, and scc-3. Interacts with scc-1, smc-1 and tim-1.

The protein resides in the nucleus. It localises to the chromosome. Involved in chromosome cohesion during cell cycle and in DNA repair. Involved in the repair of double strand breaks during mitosis and meiosis. Required for chromosome segregation during mitosis. Central component of cohesin complex. The cohesin complex is required for the cohesion of sister chromatids after DNA replication. The cohesin complex apparently forms a large proteinaceous ring within which sister chromatids can be trapped. At anaphase, the complex is cleaved and dissociates from chromatin, allowing sister chromatids to segregate. Required for the localization of lab-1 to meiotic and mitotic chromosomes. The polypeptide is Structural maintenance of chromosomes protein 3 (Caenorhabditis elegans).